Consider the following 287-residue polypeptide: ATP synthase gamma chain (287 aa).

The protein belongs to the ATPase gamma chain family. In terms of assembly, F-type ATPases have 2 components, CF(1) - the catalytic core - and CF(0) - the membrane proton channel. CF(1) has five subunits: alpha(3), beta(3), gamma(1), delta(1), epsilon(1). CF(0) has three main subunits: a, b and c.

Its subcellular location is the cell inner membrane. Produces ATP from ADP in the presence of a proton gradient across the membrane. The gamma chain is believed to be important in regulating ATPase activity and the flow of protons through the CF(0) complex. The sequence is that of ATP synthase gamma chain from Geobacter sp. (strain M21).